Consider the following 147-residue polypeptide: Acireductone dioxygenase (147 aa).

4 residues coordinate Fe(2+): histidine 74, histidine 76, glutamate 80, and histidine 119. The Ni(2+) site is built by histidine 74, histidine 76, glutamate 80, and histidine 119.

This sequence belongs to the acireductone dioxygenase (ARD) family. It depends on Fe(2+) as a cofactor. Ni(2+) is required as a cofactor.

The protein resides in the cytoplasm. Its subcellular location is the nucleus. It carries out the reaction 1,2-dihydroxy-5-(methylsulfanyl)pent-1-en-3-one + O2 = 4-methylsulfanyl-2-oxobutanoate + formate + 2 H(+). The catalysed reaction is 1,2-dihydroxy-5-(methylsulfanyl)pent-1-en-3-one + O2 = 3-(methylsulfanyl)propanoate + CO + formate + 2 H(+). It participates in amino-acid biosynthesis; L-methionine biosynthesis via salvage pathway; L-methionine from S-methyl-5-thio-alpha-D-ribose 1-phosphate: step 5/6. In terms of biological role, catalyzes 2 different reactions between oxygen and the acireductone 1,2-dihydroxy-3-keto-5-methylthiopentene (DHK-MTPene) depending upon the metal bound in the active site. Fe-containing acireductone dioxygenase (Fe-ARD) produces formate and 2-keto-4-methylthiobutyrate (KMTB), the alpha-ketoacid precursor of methionine in the methionine recycle pathway. Ni-containing acireductone dioxygenase (Ni-ARD) produces methylthiopropionate, carbon monoxide and formate, and does not lie on the methionine recycle pathway. The protein is Acireductone dioxygenase (adi1) of Dictyostelium discoideum (Social amoeba).